A 449-amino-acid polypeptide reads, in one-letter code: MKEQITICGAGLVGSLLAVYLIERGFSVRVFEKRKDPRKNEADAGRSINLAISHRGIHALKDAQTGLEKEALKLAVPMYGRAIHDLHGHVSFQAYGEASQHINSIGRGALNKLLITTAENLGVHFLFEHTCTDYHAAGEQWLFSDITGNTVATQSKEIVIGADGAFSIVRSFLSKQQQPQPQIETLEYGYKELEIASAHTETITNNQALHIWPRERFMLIALPNEDGSYTATLFLPLKGEISFEALQSDQDIQLFFKKYFPDTENLFPDLTEQFYRHPTSKLFTIHSSNWFNAHTLLIGDAAHALVPFYGQGMNAGFEDCRILAEIIDGKSKTNWSEIFAEFYNQRKENADAISDLALQNFIEMRDHVADASFLLRKKIEKHLHQELEDAFIPQYTMVSFTDISYKEAMETGLLHQKILDEIMAIPDIEAAWPTEELKNKVITVTKKYI.

Belongs to the aromatic-ring hydroxylase family. KMO subfamily. FAD is required as a cofactor.

It catalyses the reaction L-kynurenine + NADPH + O2 + H(+) = 3-hydroxy-L-kynurenine + NADP(+) + H2O. It participates in cofactor biosynthesis; NAD(+) biosynthesis; quinolinate from L-kynurenine: step 1/3. Functionally, catalyzes the hydroxylation of L-kynurenine (L-Kyn) to form 3-hydroxy-L-kynurenine (L-3OHKyn). Required for synthesis of quinolinic acid. In Cytophaga hutchinsonii (strain ATCC 33406 / DSM 1761 / CIP 103989 / NBRC 15051 / NCIMB 9469 / D465), this protein is Kynurenine 3-monooxygenase.